Here is a 389-residue protein sequence, read N- to C-terminus: Choline/ethanolaminephosphotransferase 2 (389 aa).

8 consecutive transmembrane segments (helical) span residues 49-69, 141-161, 176-196, 220-240, 252-272, 286-306, 321-338, and 350-370; these read MITL…YIYS, TFWF…EHYF, GLAL…EWWA, IILF…NTSN, MLLA…VLIW, HLVV…MILA, MSLL…TARL, and VLLG…TSVI.

The protein belongs to the CDP-alcohol phosphatidyltransferase class-I family. Mg(2+) serves as cofactor. The cofactor is Mn(2+).

The protein resides in the membrane. The catalysed reaction is CDP-ethanolamine + a 1,2-diacyl-sn-glycerol = a 1,2-diacyl-sn-glycero-3-phosphoethanolamine + CMP + H(+). It carries out the reaction CDP-choline + a 1,2-diacyl-sn-glycerol = a 1,2-diacyl-sn-glycero-3-phosphocholine + CMP + H(+). It participates in phospholipid metabolism; phosphatidylethanolamine biosynthesis; phosphatidylethanolamine from ethanolamine: step 3/3. The protein operates within phospholipid metabolism; phosphatidylcholine biosynthesis; phosphatidylcholine from phosphocholine: step 2/2. Catalyzes both phosphatidylcholine and phosphatidylethanolamine biosynthesis from CDP-choline and CDP-ethanolamine, respectively. Has a higher cholinephosphotransferase activity than ethanolaminephosphotransferase activity. The chain is Choline/ethanolaminephosphotransferase 2 (AAPT2) from Arabidopsis thaliana (Mouse-ear cress).